The primary structure comprises 534 residues: CD276 antigen (534 aa).

The signal sequence occupies residues 1–28 (MLRRRGSPGMGVHVGAALGALWFCLTGA). The Ig-like V-type 1 domain maps to 29 to 139 (LEVQVPEDPV…GSAAVSLQVA (111 aa)). The Extracellular segment spans residues 29 to 466 (LEVQVPEDPV…GQPMTFPPEA (438 aa)). Cystine bridges form between cysteine 50–cysteine 122, cysteine 165–cysteine 220, cysteine 268–cysteine 340, and cysteine 383–cysteine 438. N-linked (GlcNAc...) asparagine glycosylation is found at asparagine 104, asparagine 189, asparagine 215, asparagine 322, asparagine 407, and asparagine 433. An Ig-like C2-type 1 domain is found at 145–238 (PSMTLEPNKD…QDAHSSVTIT (94 aa)). Positions 243 to 357 (PTGAVEVQVP…GSAAVSLQVA (115 aa)) constitute an Ig-like V-type 2 domain. Residues 363–456 (PSMTLEPNKD…QDAHGSVTIT (94 aa)) enclose the Ig-like C2-type 2 domain. Residues 467-487 (LWVTVGLSVCLIALLVALAFV) form a helical membrane-spanning segment. Residues 488-534 (CWRKIKQSCEEENAGAEDQDGEGEGSKTALQPLKHSDSKEDDGQEIA) are Cytoplasmic-facing. The segment covering 498 to 510 (EENAGAEDQDGEG) has biased composition (acidic residues). Positions 498–534 (EENAGAEDQDGEGEGSKTALQPLKHSDSKEDDGQEIA) are disordered. Phosphoserine is present on serine 525.

Belongs to the immunoglobulin superfamily. BTN/MOG family. In terms of assembly, interacts with TREML2 and this interaction enhances T-cell activation. Ubiquitous but not detectable in peripheral blood lymphocytes or granulocytes. Weakly expressed in resting monocytes. Expressed in dendritic cells derived from monocytes. Expressed in epithelial cells of sinonasal tissue. Expressed in extravillous trophoblast cells and Hofbauer cells of the first trimester placenta and term placenta.

The protein localises to the membrane. Its function is as follows. May participate in the regulation of T-cell-mediated immune response. May play a protective role in tumor cells by inhibiting natural-killer mediated cell lysis as well as a role of marker for detection of neuroblastoma cells. May be involved in the development of acute and chronic transplant rejection and in the regulation of lymphocytic activity at mucosal surfaces. Could also play a key role in providing the placenta and fetus with a suitable immunological environment throughout pregnancy. Both isoform 1 and isoform 2 appear to be redundant in their ability to modulate CD4 T-cell responses. Isoform 2 is shown to enhance the induction of cytotoxic T-cells and selectively stimulates interferon gamma production in the presence of T-cell receptor signaling. This is CD276 antigen (CD276) from Homo sapiens (Human).